A 486-amino-acid polypeptide reads, in one-letter code: Coronin-1B (486 aa).

Phosphoserine; by PKC is present on Ser-2. WD repeat units follow at residues 80–120 (GHTG…LTSP), 130–170 (GHTK…ELYR), 174–213 (LHPDLIYNVSWNRNGSLFCSACKDKSVRIIDPRRGTLVAE), 217–260 (AHEG…EPMA), and 265–305 (DSSN…PYIH). Residues 404-444 (LKVSRRNVLSDSRPTSAARPAAPAPAAPAPAAAASSSLSGA) form a disordered region. Low complexity predominate over residues 432–444 (APAAAASSSLSGA). Positions 446 to 484 (EAGKLEEVMRELRALRALVKEQGERIGRLEEQLGRVENG) form a coiled coil.

It belongs to the WD repeat coronin family. In terms of assembly, forms homooligomers, but does not form complexes with the other coronins. Interacts with Arp2/3 complex components, including ACTR2, ARPC1B and ARPC2. Binds actin. In terms of processing, phosphorylated in vivo by PKC in response to cholinergic stimulation. Phosphorylation on Ser-2 regulates the interaction with the Arp2/3 complex and cell motility in fibroblasts. Phosphorylation does not seem to affect subcellular location.

It is found in the cytoplasm. The protein resides in the cytoskeleton. Its subcellular location is the stress fiber. Regulates leading edge dynamics and cell motility in fibroblasts. May be involved in cytokinesis and signal transduction. The sequence is that of Coronin-1B (CORO1B) from Oryctolagus cuniculus (Rabbit).